The sequence spans 272 residues: 3-methyl-2-oxobutanoate hydroxymethyltransferase (272 aa).

Mg(2+) contacts are provided by aspartate 50 and aspartate 89. Residues 50-51 (DS), aspartate 89, and lysine 119 contribute to the 3-methyl-2-oxobutanoate site. Glutamate 121 contacts Mg(2+). The active-site Proton acceptor is the glutamate 188.

The protein belongs to the PanB family. As to quaternary structure, homodecamer; pentamer of dimers. Requires Mg(2+) as cofactor.

The protein resides in the cytoplasm. It carries out the reaction 3-methyl-2-oxobutanoate + (6R)-5,10-methylene-5,6,7,8-tetrahydrofolate + H2O = 2-dehydropantoate + (6S)-5,6,7,8-tetrahydrofolate. It functions in the pathway cofactor biosynthesis; (R)-pantothenate biosynthesis; (R)-pantoate from 3-methyl-2-oxobutanoate: step 1/2. In terms of biological role, catalyzes the reversible reaction in which hydroxymethyl group from 5,10-methylenetetrahydrofolate is transferred onto alpha-ketoisovalerate to form ketopantoate. The protein is 3-methyl-2-oxobutanoate hydroxymethyltransferase of Methylobacterium radiotolerans (strain ATCC 27329 / DSM 1819 / JCM 2831 / NBRC 15690 / NCIMB 10815 / 0-1).